The following is a 97-amino-acid chain: Large ribosomal subunit protein bL28 (97 aa).

This sequence belongs to the bacterial ribosomal protein bL28 family.

In Rickettsia bellii (strain OSU 85-389), this protein is Large ribosomal subunit protein bL28.